We begin with the raw amino-acid sequence, 215 residues long: Adenylate kinase (215 aa).

An ATP-binding site is contributed by 10–15; sequence GAGKGT. An NMP region spans residues 30 to 59; sequence STGDILRANVREGTELGLAAKAYMDKGELV. AMP contacts are provided by residues Thr31, Arg36, 57 to 59, 85 to 88, and Gln92; these read ELV and GYPR. Residues 126-162 are LID; it reads GRLMCKCGASYHTIANPPKKDNICDICGGEVYQRDDD. Arg127 contributes to the ATP binding site. Zn(2+) contacts are provided by Cys130 and Cys132. Position 135 to 136 (135 to 136) interacts with ATP; sequence SY. Cys149 and Cys152 together coordinate Zn(2+). Positions 159 and 170 each coordinate AMP. Lys198 is a binding site for ATP.

Belongs to the adenylate kinase family. In terms of assembly, monomer.

The protein resides in the cytoplasm. The enzyme catalyses AMP + ATP = 2 ADP. It functions in the pathway purine metabolism; AMP biosynthesis via salvage pathway; AMP from ADP: step 1/1. In terms of biological role, catalyzes the reversible transfer of the terminal phosphate group between ATP and AMP. Plays an important role in cellular energy homeostasis and in adenine nucleotide metabolism. The polypeptide is Adenylate kinase (Methanosarcina mazei (strain ATCC BAA-159 / DSM 3647 / Goe1 / Go1 / JCM 11833 / OCM 88) (Methanosarcina frisia)).